Reading from the N-terminus, the 139-residue chain is Transcription antitermination protein NusB (139 aa).

It belongs to the NusB family.

Involved in transcription antitermination. Required for transcription of ribosomal RNA (rRNA) genes. Binds specifically to the boxA antiterminator sequence of the ribosomal RNA (rrn) operons. The sequence is that of Transcription antitermination protein NusB from Pectobacterium carotovorum subsp. carotovorum (strain PC1).